The sequence spans 504 residues: TGF-beta-activated kinase 1 and MAP3K7-binding protein 1 (504 aa).

Residues 1 to 22 (MAAQRRSLLQSEQQPSWTDDLP) are disordered. The residue at position 7 (Ser-7) is a Phosphoserine. Polar residues predominate over residues 7–17 (SLLQSEQQPSW). The region spanning 28–365 (GVGSASNRSY…EDMTLLVRNF (338 aa)) is the PPM-type phosphatase domain. Ser-378 is subject to Phosphoserine. The O-linked (GlcNAc) serine glycan is linked to Ser-395. Ser-423 carries the post-translational modification Phosphoserine; by MAPK14. The segment covering 430–439 (ATPTLTNQSP) has biased composition (polar residues). The tract at residues 430-478 (ATPTLTNQSPTLTLQSTNTHTQSSSSSSDGGLFRSRPAHSLPPGEDGRV) is disordered. Thr-431 is modified (phosphothreonine; by MAPK14). Residue Ser-438 is modified to Phosphoserine; by MAPK14. The segment covering 440-457 (TLTLQSTNTHTQSSSSSS) has biased composition (low complexity). Thr-442 carries the post-translational modification Phosphothreonine.

Interacts with XIAP and BIRC7. Interacts with TRAF6 and MAP3K7; during IL-1 signaling. Identified in the TRIKA2 complex composed of MAP3K7, TAB1 and TAB2. Interacts with TRAF6 and MAPK14; these interactions allow MAPK14 autophosphorylation. Interacts with STING1; interaction takes place following cGAMP activation and promotes TAB1 recruitment to the endoplasmic reticulum, triggering MAP3K7/TAK1 activation and STING1 phosphorylation. In terms of processing, phosphorylated at all three sites Ser-423, Thr-431 and Ser-438 by MAPK14 when cells were exposed to cellular stresses, or stimulated with TNF-alpha, IL1 or LPS. These phosphorylations inhibit TAK1 activation by a feedback control mechanism. Dephosphorylated by DUSP14 at Ser-438, leading to TAB1-MAP3K7/TAK1 complex inactivation in T-cells. Post-translationally, ubiquitinated by MAP3K1 with 'Lys-63'-linked polyubiquitin; leading to activation of TAK1 and of JNK and p38 MAP kinases following EGF and TGF-beta stimulation. Ubiquitinated by ITCH with 'Lys-48'-linked polyubiquitin; leading to proteasomal degradation. Ubiquitinated by RNF114 during maternal-to-zygotic transition; leading to degradation. (Microbial infection) Deubiquitinated by Y.enterocolitica YopP. In terms of processing, O-GlcNAcylated at Ser-395 by OGT is required for full MAP3K7/TAK1 activation upon stimulation with IL-1 or osmotic stress. Deglycosylated at Ser-395 by OGA. Ubiquitous.

The protein localises to the cytoplasm. It localises to the cytosol. Its subcellular location is the endoplasmic reticulum membrane. Key adapter protein that plays an essential role in JNK and NF-kappa-B activation and proinflammatory cytokines production in response to stimulation with TLRs and cytokines. Mechanistically, associates with the catalytic domain of MAP3K7/TAK1 to trigger MAP3K7/TAK1 autophosphorylation leading to its full activation. Similarly, associates with MAPK14 and triggers its autophosphorylation and subsequent activation. In turn, MAPK14 phosphorylates TAB1 and inhibits MAP3K7/TAK1 activation in a feedback control mechanism. Also plays a role in recruiting MAPK14 to the TAK1 complex for the phosphorylation of the TAB2 and TAB3 regulatory subunits. The sequence is that of TGF-beta-activated kinase 1 and MAP3K7-binding protein 1 (TAB1) from Homo sapiens (Human).